Here is a 140-residue protein sequence, read N- to C-terminus: Acyl-coenzyme A thioesterase 13 (140 aa).

Residue Met1 is modified to N-acetylmethionine. N-acetylthreonine; in Acyl-coenzyme A thioesterase 13, N-terminally processed is present on Thr2. Residues Lys27, Lys37, and Lys43 each carry the N6-acetyllysine modification. Glu46 contacts CoA. Positions 50 and 81 each coordinate substrate. Residues Ser83, 90-95, and 108-113 each bind CoA; these read YMSPAK and KQGKTL. Residues Lys108 and Lys127 each carry the N6-acetyllysine modification. His137 serves as a coordination point for CoA.

This sequence belongs to the thioesterase PaaI family. Homotetramer. Interacts with PCTP.

It localises to the cytoplasm. It is found in the cytosol. Its subcellular location is the mitochondrion. The protein localises to the nucleus. The protein resides in the cytoskeleton. It localises to the spindle. The catalysed reaction is a fatty acyl-CoA + H2O = a fatty acid + CoA + H(+). The enzyme catalyses decanoyl-CoA + H2O = decanoate + CoA + H(+). It carries out the reaction octanoyl-CoA + H2O = octanoate + CoA + H(+). It catalyses the reaction butanoyl-CoA + H2O = butanoate + CoA + H(+). The catalysed reaction is hexanoyl-CoA + H2O = hexanoate + CoA + H(+). The enzyme catalyses tetradecanoyl-CoA + H2O = tetradecanoate + CoA + H(+). It carries out the reaction hexadecanoyl-CoA + H2O = hexadecanoate + CoA + H(+). It catalyses the reaction dodecanoyl-CoA + H2O = dodecanoate + CoA + H(+). The catalysed reaction is (9Z)-octadecenoyl-CoA + H2O = (9Z)-octadecenoate + CoA + H(+). The enzyme catalyses (5Z,8Z,11Z,14Z)-eicosatetraenoyl-CoA + H2O = (5Z,8Z,11Z,14Z)-eicosatetraenoate + CoA + H(+). In terms of biological role, catalyzes the hydrolysis of acyl-CoAs into free fatty acids and coenzyme A (CoASH), regulating their respective intracellular levels. Has acyl-CoA thioesterase activity towards medium (C12) and long-chain (C18) fatty acyl-CoA substrates. Can also hydrolyze 3-hydroxyphenylacetyl-CoA and 3,4-dihydroxyphenylacetyl-CoA (in vitro). May play a role in controlling adaptive thermogenesis. This Homo sapiens (Human) protein is Acyl-coenzyme A thioesterase 13.